The following is a 226-amino-acid chain: Lysosomal-associated transmembrane protein 4B (226 aa).

Transmembrane regions (helical) follow at residues 26–46 (ILLGVWYLIINAVVLLILLSA), 72–92 (MCIAIAISLLMILICAMATYG), 100–120 (WIIPFFCYQIFDFALNTLVAI), and 153–173 (CLVLIILLFISIILTFKGYLI). The segment at 205–221 (PPYDDATVNGAAKEPPP) is required for NEDD4 interaction.

The protein belongs to the LAPTM4/LAPTM5 transporter family. As to quaternary structure, homooligomer; upon reaching the lysosomes. Interacts with MCOLN1. Interacts with NEDD4; may play a role in the lysosomal sorting of LAPTM4B; enhances HGS association with NEDD4; mediates inhibition of EGFR degradation. Interacts with PIP5K1C; promotes SNX5 association with LAPTM4B; kinase activity of PIP5K1C is required; interaction is regulated by phosphatidylinositol 4,5-bisphosphate generated by PIP5K1C. Interacts with HGS; promotes HGS ubiquitination. Interacts with SNX5. Interacts with SLC3A2 and SLC7A5; recruits SLC3A2 and SLC7A5 to lysosomes to promote leucine uptake into these organelles and is required for mTORC1 activation. Interacts with LRRC32; decreases TGFB1 production in regulatory T cells. Interacts with BECN1; competes with EGFR for LAPTM4B binding; regulates EGFR activity. Interacts with EGFR; positively correlates with EGFR activation. Post-translationally, undergoes proteolytic cleavage following delivery to the lysosomes. Ubiquitinated by NEDD4.

It is found in the endomembrane system. The protein resides in the late endosome membrane. The protein localises to the cell membrane. It localises to the cell projection. Its subcellular location is the lysosome membrane. It is found in the endosome membrane. The protein resides in the endosome. The protein localises to the multivesicular body membrane. It localises to the multivesicular body lumen. Its function is as follows. Required for optimal lysosomal function. Blocks EGF-stimulated EGFR intraluminal sorting and degradation. Conversely by binding with the phosphatidylinositol 4,5-bisphosphate, regulates its PIP5K1C interaction, inhibits HGS ubiquitination and relieves LAPTM4B inhibition of EGFR degradation. Recruits SLC3A2 and SLC7A5 (the Leu transporter) to the lysosome, promoting entry of leucine and other essential amino acid (EAA) into the lysosome, stimulating activation of proton-transporting vacuolar (V)-ATPase protein pump (V-ATPase) and hence mTORC1 activation. Plays a role as negative regulator of TGFB1 production in regulatory T cells. Binds ceramide and facilitates its exit from late endosome in order to control cell death pathways. The protein is Lysosomal-associated transmembrane protein 4B of Macaca fascicularis (Crab-eating macaque).